The sequence spans 704 residues: DNA-binding protein RFX2 (704 aa).

Positions 1-39 (MQNSEGGADSPASVALRPSAAAPPVPASPQRVLVQAASS) are disordered. Low complexity predominate over residues 10–20 (SPASVALRPSA). Serine 28 bears the Phosphoserine mark. Positions 199–274 (HLQWLLDNYE…YHYYGIRLKP (76 aa)) form a DNA-binding region, RFX-type winged-helix. The interval 292–334 (QQPMHQKPRYRPAQKTDSLGDSSSHSGLHSTPEQTTAAQNQHH) is disordered. Residues 307-334 (TDSLGDSSSHSGLHSTPEQTTAAQNQHH) show a composition bias toward low complexity. Serine 416 is subject to Phosphoserine.

The protein belongs to the RFX family. As to quaternary structure, homodimer; probably only forms homodimers in testis. Heterodimer; heterodimerizes with RFX1 and RFX3.

It is found in the nucleus. It localises to the cytoplasm. In terms of biological role, transcription factor that acts as a key regulator of spermatogenesis. Acts by regulating expression of genes required for the haploid phase during spermiogenesis, such as genes required for cilium assembly and function. Recognizes and binds the X-box, a regulatory motif with DNA sequence 5'-GTNRCC(0-3N)RGYAAC-3' present on promoters. Probably activates transcription of the testis-specific histone gene H1-6. This chain is DNA-binding protein RFX2 (RFX2), found in Pongo abelii (Sumatran orangutan).